Here is a 210-residue protein sequence, read N- to C-terminus: Transcriptional regulator GfcR (210 aa).

Positions 39–60 (VERSGAATEPEPRAEPEGPDDI) are disordered. The span at 48 to 60 (PEPRAEPEGPDDI) shows a compositional bias: basic and acidic residues.

Belongs to the purine/pyrimidine phosphoribosyltransferase family. GfcR subfamily.

Its activity is regulated as follows. Interaction with effectors modulates GfcR activity. 2-keto-3-deoxy-6-phosphogluconate (KDPG), fructose-1,6-bisphosphate (FBP), 2-keto-3-deoxy-6-phosphogalactonate (KDPGal) and glycerol-3-phosphate (G3P), which are intermediates of sugar and glycerol degradation pathways, can act as inducer molecules. In terms of biological role, DNA-binding transcriptional regulator that functions as a regulator of central sugar catabolic pathways. Is both a local regulator of specific steps in the pathways for D-glucose and D-fructose degradation and a global regulator of hexose catabolism. In the presence of D-glucose, activates expression of the gene encoding the gluconate dehydratase (gad), which is involved in D-glucose catabolism via the semiphosphorylative Entner-Doudoroff (spED) pathway. In the presence of D-fructose, activates expression of the genes encoding the PTS system EIIC component (ptfC) and the fructose-1,6-bisphosphate aldolase (fba), which are involved in D-fructose uptake and degradation via the modified Embden-Meyerhof pathway. In addition, in the presence of D-glucose, D-fructose, D-galactose or glycerol, it activates expression of the genes encoding glyceraldehyde-3-phosphate dehydrogenase (gap) and pyruvate kinase (pykA), enzymes common to all four degradation pathways. Acts by binding directly to the promoter region of the regulated genes. This chain is Transcriptional regulator GfcR, found in Haloferax volcanii (strain ATCC 29605 / DSM 3757 / JCM 8879 / NBRC 14742 / NCIMB 2012 / VKM B-1768 / DS2) (Halobacterium volcanii).